Here is a 501-residue protein sequence, read N- to C-terminus: Pyruvate kinase (501 aa).

Arg-50 contributes to the substrate binding site. Residues Asn-52, Ser-54, Asp-85, and Thr-86 each coordinate K(+). 52–55 (NFSH) contacts ATP. Positions 92 and 178 each coordinate ATP. Residue Glu-243 participates in Mg(2+) binding. The substrate site is built by Gly-266, Asp-267, and Thr-299. A Mg(2+)-binding site is contributed by Asp-267.

The protein belongs to the pyruvate kinase family. In terms of assembly, homotetramer. Requires Mg(2+) as cofactor. It depends on K(+) as a cofactor.

The enzyme catalyses pyruvate + ATP = phosphoenolpyruvate + ADP + H(+). It participates in carbohydrate degradation; glycolysis; pyruvate from D-glyceraldehyde 3-phosphate: step 5/5. This Lachancea kluyveri (strain ATCC 58438 / CBS 3082 / BCRC 21498 / NBRC 1685 / JCM 7257 / NCYC 543 / NRRL Y-12651) (Yeast) protein is Pyruvate kinase (PYK1).